The chain runs to 122 residues: Small ribosomal subunit protein uS13 (122 aa).

The tract at residues 93 to 122 (RRGLPVRGQRTKTNARTRKGPKKTVAGKKK) is disordered.

Belongs to the universal ribosomal protein uS13 family. Part of the 30S ribosomal subunit. Forms a loose heterodimer with protein S19. Forms two bridges to the 50S subunit in the 70S ribosome.

Functionally, located at the top of the head of the 30S subunit, it contacts several helices of the 16S rRNA. In the 70S ribosome it contacts the 23S rRNA (bridge B1a) and protein L5 of the 50S subunit (bridge B1b), connecting the 2 subunits; these bridges are implicated in subunit movement. Contacts the tRNAs in the A and P-sites. The protein is Small ribosomal subunit protein uS13 of Micrococcus luteus (strain ATCC 4698 / DSM 20030 / JCM 1464 / CCM 169 / CCUG 5858 / IAM 1056 / NBRC 3333 / NCIMB 9278 / NCTC 2665 / VKM Ac-2230) (Micrococcus lysodeikticus).